Here is a 69-residue protein sequence, read N- to C-terminus: Photosystem I reaction center subunit IV (69 aa).

This sequence belongs to the PsaE family.

It localises to the cellular thylakoid membrane. Stabilizes the interaction between PsaC and the PSI core, assists the docking of the ferredoxin to PSI and interacts with ferredoxin-NADP oxidoreductase. This Prochlorococcus marinus (strain MIT 9215) protein is Photosystem I reaction center subunit IV.